A 279-amino-acid chain; its full sequence is Proteasome subunit beta (279 aa).

Positions 1 to 53 are cleaved as a propeptide — removed in mature form; by autocatalysis; it reads MSGTAEFPGRIPAPYLEVGSSSFVELLGSVAPELLPGRRPLPPGDMGDAAPHG. T54 (nucleophile) is an active-site residue.

This sequence belongs to the peptidase T1B family. In terms of assembly, the 20S proteasome core is composed of 14 alpha and 14 beta subunits that assemble into four stacked heptameric rings, resulting in a barrel-shaped structure. The two inner rings, each composed of seven catalytic beta subunits, are sandwiched by two outer rings, each composed of seven alpha subunits. The catalytic chamber with the active sites is on the inside of the barrel. Has a gated structure, the ends of the cylinder being occluded by the N-termini of the alpha-subunits. Is capped by the proteasome-associated ATPase, ARC.

Its subcellular location is the cytoplasm. It catalyses the reaction Cleavage of peptide bonds with very broad specificity.. Its pathway is protein degradation; proteasomal Pup-dependent pathway. With respect to regulation, the formation of the proteasomal ATPase ARC-20S proteasome complex, likely via the docking of the C-termini of ARC into the intersubunit pockets in the alpha-rings, may trigger opening of the gate for substrate entry. Interconversion between the open-gate and close-gate conformations leads to a dynamic regulation of the 20S proteasome proteolysis activity. In terms of biological role, component of the proteasome core, a large protease complex with broad specificity involved in protein degradation. This chain is Proteasome subunit beta, found in Stackebrandtia nassauensis (strain DSM 44728 / CIP 108903 / NRRL B-16338 / NBRC 102104 / LLR-40K-21).